The primary structure comprises 384 residues: 23S rRNA (uracil(747)-C(5))-methyltransferase RlmC (384 aa).

Residues cysteine 7, cysteine 15, cysteine 18, and cysteine 94 each contribute to the [4Fe-4S] cluster site. Residues glutamine 219, phenylalanine 248, glutamate 269, and asparagine 316 each contribute to the S-adenosyl-L-methionine site. Residue cysteine 343 is the Nucleophile of the active site.

Belongs to the class I-like SAM-binding methyltransferase superfamily. RNA M5U methyltransferase family. RlmC subfamily.

It carries out the reaction uridine(747) in 23S rRNA + S-adenosyl-L-methionine = 5-methyluridine(747) in 23S rRNA + S-adenosyl-L-homocysteine + H(+). In terms of biological role, catalyzes the formation of 5-methyl-uridine at position 747 (m5U747) in 23S rRNA. This is 23S rRNA (uracil(747)-C(5))-methyltransferase RlmC from Shewanella sp. (strain MR-4).